Reading from the N-terminus, the 501-residue chain is 7-alpha-hydroxycholest-4-en-3-one 12-alpha-hydroxylase (501 aa).

The helical transmembrane segment at 1–21 (MVLWGPVLGALLVVIAGYLCL) threads the bilayer. Residue serine 326 is modified to Phosphoserine. Cysteine 440 serves as a coordination point for heme.

It belongs to the cytochrome P450 family. Heme serves as cofactor. In terms of tissue distribution, liver.

It is found in the endoplasmic reticulum membrane. The protein localises to the microsome membrane. The enzyme catalyses 7alpha-hydroxycholest-4-en-3-one + reduced [NADPH--hemoprotein reductase] + O2 = 7alpha,12alpha-dihydroxycholest-4-en-3-one + oxidized [NADPH--hemoprotein reductase] + H2O + H(+). The catalysed reaction is 5beta-cholestane-3alpha,7alpha-diol + reduced [NADPH--hemoprotein reductase] + O2 = 5beta-cholestane-3alpha,7alpha,12alpha-triol + oxidized [NADPH--hemoprotein reductase] + H2O + H(+). It carries out the reaction chenodeoxycholate + reduced [NADPH--hemoprotein reductase] + O2 = cholate + oxidized [NADPH--hemoprotein reductase] + H2O + H(+). It participates in lipid metabolism; bile acid biosynthesis. Its function is as follows. A cytochrome P450 monooxygenase involved in primary bile acid biosynthesis. Catalyzes the 12alpha-hydroxylation of 7alpha-hydroxy-4-cholesten-3-one, an intermediate metabolite in cholic acid biosynthesis. Controls biliary balance of cholic acid and chenodeoxycholic acid, ultimately regulating the intestinal absorption of dietary lipids. Mechanistically, uses molecular oxygen inserting one oxygen atom into a substrate, and reducing the second into a water molecule, with two electrons provided by NADPH via cytochrome P450 reductase (CPR; NADPH--hemoprotein reductase). The polypeptide is 7-alpha-hydroxycholest-4-en-3-one 12-alpha-hydroxylase (Homo sapiens (Human)).